The sequence spans 212 residues: Adapter protein MecA 2 (212 aa).

This sequence belongs to the MecA family. In terms of assembly, homodimer.

Its function is as follows. Enables the recognition and targeting of unfolded and aggregated proteins to the ClpC protease or to other proteins involved in proteolysis. Acts negatively in the development of competence by binding ComK and recruiting it to the ClpCP protease. When overexpressed, inhibits sporulation. Also involved in Spx degradation by ClpC. The sequence is that of Adapter protein MecA 2 (mecA2) from Halalkalibacterium halodurans (strain ATCC BAA-125 / DSM 18197 / FERM 7344 / JCM 9153 / C-125) (Bacillus halodurans).